The sequence spans 599 residues: DNA mismatch repair protein MutL (599 aa).

The protein belongs to the DNA mismatch repair MutL/HexB family.

In terms of biological role, this protein is involved in the repair of mismatches in DNA. It is required for dam-dependent methyl-directed DNA mismatch repair. May act as a 'molecular matchmaker', a protein that promotes the formation of a stable complex between two or more DNA-binding proteins in an ATP-dependent manner without itself being part of a final effector complex. In Rhodopseudomonas palustris (strain BisB18), this protein is DNA mismatch repair protein MutL.